A 308-amino-acid polypeptide reads, in one-letter code: Transaldolase (308 aa).

Lys-125 serves as the catalytic Schiff-base intermediate with substrate.

The protein belongs to the transaldolase family. Type 1 subfamily. Homodimer.

The protein localises to the cytoplasm. The catalysed reaction is D-sedoheptulose 7-phosphate + D-glyceraldehyde 3-phosphate = D-erythrose 4-phosphate + beta-D-fructose 6-phosphate. Its pathway is carbohydrate degradation; pentose phosphate pathway; D-glyceraldehyde 3-phosphate and beta-D-fructose 6-phosphate from D-ribose 5-phosphate and D-xylulose 5-phosphate (non-oxidative stage): step 2/3. Its function is as follows. Transaldolase is important for the balance of metabolites in the pentose-phosphate pathway. This is Transaldolase from Pseudomonas savastanoi pv. phaseolicola (strain 1448A / Race 6) (Pseudomonas syringae pv. phaseolicola (strain 1448A / Race 6)).